The following is a 154-amino-acid chain: Cold shock domain-containing protein C2 (154 aa).

The residue at position 19 (S19) is a Phosphoserine. The tract at residues 38–62 is disordered; it reads GGGIAPRDLPSPLPTKRTRTYSATA. Residues 69 to 136 enclose the CSD domain; that stretch reads VFKGVCKQFS…KFQAVEVVLT (68 aa).

It localises to the nucleus. It is found in the cytoplasm. Functionally, RNA-binding factor which binds specifically to the very 3'-UTR ends of both histone H1 and H3.3 mRNAs, encompassing the polyadenylation signal. Might play a central role in the negative regulation of histone variant synthesis in the developing brain. In Mus musculus (Mouse), this protein is Cold shock domain-containing protein C2 (Csdc2).